The following is a 262-amino-acid chain: tRNA (guanine-N(1)-)-methyltransferase (262 aa).

S-adenosyl-L-methionine is bound by residues Gly112 and 132–137 (IGDYIL).

Belongs to the RNA methyltransferase TrmD family. Homodimer.

The protein localises to the cytoplasm. It catalyses the reaction guanosine(37) in tRNA + S-adenosyl-L-methionine = N(1)-methylguanosine(37) in tRNA + S-adenosyl-L-homocysteine + H(+). In terms of biological role, specifically methylates guanosine-37 in various tRNAs. The chain is tRNA (guanine-N(1)-)-methyltransferase from Desulfatibacillum aliphaticivorans.